Consider the following 183-residue polypeptide: Holliday junction branch migration complex subunit RuvA (183 aa).

The interval 1–64 is domain I; sequence MIVAIEGIVS…EDSHKLYGFL (64 aa). The segment at 65–138 is domain II; the sequence is DTNEQRMFEL…SDAKINIENS (74 aa). Residue S138 is a region of interest, flexible linker. The segment at 138–183 is domain III; the sequence is SNQDHAQALAALLSLGFKQENILKVLRTCESQNTSELIKEALKKLA.

The protein belongs to the RuvA family. In terms of assembly, homotetramer. Forms an RuvA(8)-RuvB(12)-Holliday junction (HJ) complex. HJ DNA is sandwiched between 2 RuvA tetramers; dsDNA enters through RuvA and exits via RuvB. An RuvB hexamer assembles on each DNA strand where it exits the tetramer. Each RuvB hexamer is contacted by two RuvA subunits (via domain III) on 2 adjacent RuvB subunits; this complex drives branch migration. In the full resolvosome a probable DNA-RuvA(4)-RuvB(12)-RuvC(2) complex forms which resolves the HJ.

The protein resides in the cytoplasm. The RuvA-RuvB-RuvC complex processes Holliday junction (HJ) DNA during genetic recombination and DNA repair, while the RuvA-RuvB complex plays an important role in the rescue of blocked DNA replication forks via replication fork reversal (RFR). RuvA specifically binds to HJ cruciform DNA, conferring on it an open structure. The RuvB hexamer acts as an ATP-dependent pump, pulling dsDNA into and through the RuvAB complex. HJ branch migration allows RuvC to scan DNA until it finds its consensus sequence, where it cleaves and resolves the cruciform DNA. The sequence is that of Holliday junction branch migration complex subunit RuvA from Campylobacter lari (strain RM2100 / D67 / ATCC BAA-1060).